Consider the following 612-residue polypeptide: uncharacterized protein (612 aa).

The segment at 213–238 (ASAEDGEEAAAGAGKRQVARSGARKR) is disordered. One can recognise a VWFA domain in the interval 421–610 (DLACLLLADL…ERLLQLYRRL (190 aa)).

The protein resides in the cytoplasm. Its function is as follows. Component of the anaerobic respiratory chain that transforms nitrate to dinitrogen (denitrification). Function unknown, but essential for the denitrification process. This is an uncharacterized protein from Pseudomonas aeruginosa (strain ATCC 15692 / DSM 22644 / CIP 104116 / JCM 14847 / LMG 12228 / 1C / PRS 101 / PAO1).